Consider the following 91-residue polypeptide: Conotoxin VnMKLT1-021 (91 aa).

Residues 1–22 (MKLTCVMIVAVLFLTAWTFVTA) form the signal peptide. The propeptide occupies 23 to 57 (DDPRDGPDTAVGWRKLFSEARDEMKNREASKLNER). Cystine bridges form between Cys-59–Cys-78, Cys-66–Cys-82, and Cys-77–Cys-86.

This sequence belongs to the conotoxin O1 superfamily. Expressed by the venom duct.

The protein resides in the secreted. The chain is Conotoxin VnMKLT1-021 from Conus ventricosus (Mediterranean cone).